An 813-amino-acid chain; its full sequence is Serine/threonine-protein kinase kin-29 (813 aa).

In terms of domain architecture, Protein kinase spans 18 to 269 (YDVGRAIGKG…IQNVLAHRWM (252 aa)). Residues 24–32 (IGKGNFATV) and lysine 47 each bind ATP. Aspartate 140 functions as the Proton acceptor in the catalytic mechanism. The tract at residues 383 to 412 (LSSPDCDSDDSSNSDLCDESPLSSLEPNHK) is disordered. The segment covering 388–400 (CDSDDSSNSDLCD) has biased composition (acidic residues).

It belongs to the protein kinase superfamily. CAMK Ser/Thr protein kinase family. SNF1 subfamily. Interacts with tax-6. The cofactor is Mg(2+). Post-translationally, autophosphorylated. Elevated cAMP levels appears to act via PKA to directly or indirectly phosphorylate multiple sites on kin-29 and inhibit function.

Its subcellular location is the cytoplasm. It is found in the nucleus. The enzyme catalyses L-seryl-[protein] + ATP = O-phospho-L-seryl-[protein] + ADP + H(+). It carries out the reaction L-threonyl-[protein] + ATP = O-phospho-L-threonyl-[protein] + ADP + H(+). Functionally, regulates chemoreceptor expression by phosphorylating the hda-4 class II histone deacetylase (HDAC) and inhibiting the gene repression functions of hda-4 and the mef-2 transcription factor, enabling the correct sensing and transduction of food signals. Role in determining body size, the dauer decision and serotonin-mediated egg laying. May modulate the Sma/Mab pathway and regulates development in the later larval stages. The sequence is that of Serine/threonine-protein kinase kin-29 from Caenorhabditis briggsae.